The sequence spans 122 residues: MFAIYKSTLLLLPLILILLITPQVSSFLQPIQPPISPQVALIEDKARLGSTPPSCHNRCNNCHPCMAIQVPTLPTRSRFTRVNPFSGGFVRPPSSLTTVLDQYSNYKPMGWKCHCNGHFYNP.

A signal peptide spans M1–S26. 3 disulfide bridges follow: C55/C113, C59/C65, and C62/C115.

It belongs to the plant cysteine rich small secretory peptide family. Epidermal patterning factor subfamily.

It is found in the secreted. Controls stomatal patterning. The sequence is that of EPIDERMAL PATTERNING FACTOR-like protein 1 from Arabidopsis thaliana (Mouse-ear cress).